Reading from the N-terminus, the 172-residue chain is AIG2-like protein C (172 aa).

13–18 (YGSLQE) provides a ligand contact to substrate. E81 (proton acceptor) is an active-site residue.

The protein belongs to the gamma-glutamylcyclotransferase family. Expressed in flowers, leaves, stems and roots.

Putative gamma-glutamylcyclotransferase. This is AIG2-like protein C from Arabidopsis thaliana (Mouse-ear cress).